Here is a 989-residue protein sequence, read N- to C-terminus: Zinc finger SWIM domain-containing protein 4 (989 aa).

The segment at 1-32 (MEPPAAKRSRGCPAGPEERDAGAGAARGRGRP) is disordered. The SWIM-type zinc-finger motif lies at 139 to 176 (YHVSISFDRCKITSVSCGCDNRDLFYCAHVVALSLYRI).

This chain is Zinc finger SWIM domain-containing protein 4 (ZSWIM4), found in Homo sapiens (Human).